The sequence spans 835 residues: Ribonucleoside-diphosphate reductase large subunit (835 aa).

Substrate is bound by residues serine 222, 237–238, glycine 266, 447–451, and 660–664; these read SC, NLCCE, and PSASS. Cysteine 238 and cysteine 464 are joined by a disulfide. Residue asparagine 447 is the Proton acceptor of the active site. Cysteine 449 (cysteine radical intermediate) is an active-site residue. The active-site Proton acceptor is the glutamate 451.

The protein belongs to the ribonucleoside diphosphate reductase large chain family. Heterotetramer composed of a homodimer of the large subunit (R1) and a homodimer of the small subunit (R2). Larger multisubunit protein complex are also active, composed of (R1)n(R2)n.

It carries out the reaction a 2'-deoxyribonucleoside 5'-diphosphate + [thioredoxin]-disulfide + H2O = a ribonucleoside 5'-diphosphate + [thioredoxin]-dithiol. Functionally, ribonucleoside-diphosphate reductase holoenzyme provides the precursors necessary for viral DNA synthesis. Allows virus growth in non-dividing cells. Catalyzes the biosynthesis of deoxyribonucleotides from the corresponding ribonucleotides. The chain is Ribonucleoside-diphosphate reductase large subunit from Magallana gigas (Pacific oyster).